Consider the following 88-residue polypeptide: ATPase inhibitor mai-1, mitochondrial (88 aa).

The segment covering methionine 1–glycine 18 has biased composition (gly residues). Residues methionine 1 to arginine 41 form a disordered region. Residues phenylalanine 39 to glycine 87 adopt a coiled-coil conformation.

It belongs to the ATPase inhibitor family. Post-translationally, does not seem to include a transit peptide.

It is found in the mitochondrion. Thought to be a regulatory component of the ATP-synthesizing complex in the mitochondria. The chain is ATPase inhibitor mai-1, mitochondrial (mai-1) from Caenorhabditis elegans.